The chain runs to 737 residues: Zinc finger protein 280C (737 aa).

Glycyl lysine isopeptide (Lys-Gly) (interchain with G-Cter in SUMO2) cross-links involve residues lysine 5, lysine 10, lysine 14, lysine 33, and lysine 55. Residues 57-66 are compositionally biased toward polar residues; that stretch reads AISNILNRGH. Residues 57 to 137 are disordered; that stretch reads AISNILNRGH…DFTKNSQVGS (81 aa). Lysine 75 is covalently cross-linked (Glycyl lysine isopeptide (Lys-Gly) (interchain with G-Cter in SUMO2)). Phosphoserine is present on serine 80. Positions 112 to 123 are enriched in polar residues; it reads SKSSQSSVTVEN. Glycyl lysine isopeptide (Lys-Gly) (interchain with G-Cter in SUMO2) cross-links involve residues lysine 113, lysine 126, lysine 167, lysine 174, lysine 180, and lysine 187. A compositionally biased stretch (polar residues) spans 176-185; that stretch reads PSTSKVNSVT. The disordered stretch occupies residues 176–223; that stretch reads PSTSKVNSVTPKKPKTSEDVPQINPSTSLPLIGSPPVTSSQVMLSKGT. Over residues 211 to 223 the composition is skewed to polar residues; it reads PVTSSQVMLSKGT. Threonine 223 is modified (phosphothreonine). A Phosphoserine modification is found at serine 227. Lysine 273 is covalently cross-linked (Glycyl lysine isopeptide (Lys-Gly) (interchain with G-Cter in SUMO2)). 5 consecutive C2H2-type zinc fingers follow at residues 316 to 338, 353 to 376, 383 to 406, 413 to 436, and 470 to 492; these read FKCF…MKHH, TTCQ…ESTH, TICK…KDTH, YVCQ…RAAH, and HRCP…KAQH. Lysine 522 participates in a covalent cross-link: Glycyl lysine isopeptide (Lys-Gly) (interchain with G-Cter in SUMO2). The span at 535–579 shows a compositional bias: polar residues; sequence SFLQVTPPTSQNTTARNPRKSNASRSKTSKLHATTSTASKVNTSK. A disordered region spans residues 535–602; sequence SFLQVTPPTS…YKQKRQRNRK (68 aa). Threonine 540 is modified (phosphothreonine). Residues lysine 564 and lysine 574 each participate in a glycyl lysine isopeptide (Lys-Gly) (interchain with G-Cter in SUMO2) cross-link. Residues 580 to 602 show a composition bias toward basic residues; it reads PRGRIAKSKAKPSYKQKRQRNRK.

It is found in the nucleus. In terms of biological role, may function as a transcription factor. The chain is Zinc finger protein 280C (ZNF280C) from Homo sapiens (Human).